Consider the following 314-residue polypeptide: N-acyl-aromatic-L-amino acid amidohydrolase (carboxylate-forming) B (314 aa).

Residues His19 and Glu22 each coordinate Zn(2+). Substrate-binding positions include Arg63 and 70 to 71; that span reads NR. A Zn(2+)-binding site is contributed by His116. Glu178 and Tyr289 together coordinate substrate.

This sequence belongs to the AspA/AstE family. Aspartoacylase subfamily. As to quaternary structure, homotetramer. Zn(2+) serves as cofactor.

It is found in the apical cell membrane. Its subcellular location is the cytoplasm. The enzyme catalyses an N-acyl-aromatic L-alpha-amino acid + H2O = an aromatic L-alpha-amino acid + a carboxylate. The catalysed reaction is an N-acetyl-L-cysteine-S-conjugate + H2O = an S-substituted L-cysteine + acetate. In terms of biological role, plays an important role in deacetylating mercapturic acids in kidney proximal tubules. This Danio rerio (Zebrafish) protein is N-acyl-aromatic-L-amino acid amidohydrolase (carboxylate-forming) B (acy3.2).